The chain runs to 127 residues: Ribosome-binding factor A (127 aa).

It belongs to the RbfA family. Monomer. Binds 30S ribosomal subunits, but not 50S ribosomal subunits or 70S ribosomes.

The protein localises to the cytoplasm. Functionally, one of several proteins that assist in the late maturation steps of the functional core of the 30S ribosomal subunit. Associates with free 30S ribosomal subunits (but not with 30S subunits that are part of 70S ribosomes or polysomes). Required for efficient processing of 16S rRNA. May interact with the 5'-terminal helix region of 16S rRNA. This chain is Ribosome-binding factor A, found in Stenotrophomonas maltophilia (strain R551-3).